Consider the following 260-residue polypeptide: Cytochrome c oxidase subunit 2 (260 aa).

Residues 1-41 (MIVLKWLFFTISPCDAAEPWQLGFQDAATPIMQGIIDLHHD) lie on the Mitochondrial intermembrane side of the membrane. Residues 42–62 (IFFFLILILVFVLWILVRALW) traverse the membrane as a helical segment. Residues 63-86 (HFHYKKNAIPQRIVHGTTIEILWT) are Mitochondrial matrix-facing. A helical transmembrane segment spans residues 87–107 (IFPSIILMFIAIPSFALLYSM). The Mitochondrial intermembrane segment spans residues 108 to 260 (DEVVVDPAIT…NQLIPQTGEA (153 aa)). 6 residues coordinate Cu cation: His187, Cys222, Glu224, Cys226, His230, and Met233. A Mg(2+)-binding site is contributed by Glu224.

It belongs to the cytochrome c oxidase subunit 2 family. Component of the cytochrome c oxidase (complex IV, CIV), a multisubunit enzyme composed of a catalytic core of 3 subunits and several supernumerary subunits. The complex exists as a monomer or a dimer and forms supercomplexes (SCs) in the inner mitochondrial membrane with ubiquinol-cytochrome c oxidoreductase (cytochrome b-c1 complex, complex III, CIII). Cu cation serves as cofactor.

The protein resides in the mitochondrion inner membrane. It catalyses the reaction 4 Fe(II)-[cytochrome c] + O2 + 8 H(+)(in) = 4 Fe(III)-[cytochrome c] + 2 H2O + 4 H(+)(out). In terms of biological role, component of the cytochrome c oxidase, the last enzyme in the mitochondrial electron transport chain which drives oxidative phosphorylation. The respiratory chain contains 3 multisubunit complexes succinate dehydrogenase (complex II, CII), ubiquinol-cytochrome c oxidoreductase (cytochrome b-c1 complex, complex III, CIII) and cytochrome c oxidase (complex IV, CIV), that cooperate to transfer electrons derived from NADH and succinate to molecular oxygen, creating an electrochemical gradient over the inner membrane that drives transmembrane transport and the ATP synthase. Cytochrome c oxidase is the component of the respiratory chain that catalyzes the reduction of oxygen to water. Electrons originating from reduced cytochrome c in the intermembrane space (IMS) are transferred via the dinuclear copper A center (CU(A)) of subunit 2 and heme A of subunit 1 to the active site in subunit 1, a binuclear center (BNC) formed by heme A3 and copper B (CU(B)). The BNC reduces molecular oxygen to 2 water molecules using 4 electrons from cytochrome c in the IMS and 4 protons from the mitochondrial matrix. The chain is Cytochrome c oxidase subunit 2 (COX2) from Arabidopsis thaliana (Mouse-ear cress).